We begin with the raw amino-acid sequence, 494 residues long: MDSHEVLLAATYLLGTLAAFCLGQSGRGGLDIQVMLSGSNSKCQGQVEIQMENKWKTVCSSSWRLSQDHSKNAQQASAVCKQLRCGDPLALGPFPSLNRPQNQVFCQGSPWSISNCNNTSSQDQCLPLSLICLEPQRTTPPPTTTPPTTVPEPTAPPRLQLVPGHEGLRCTGVVEFYNGSWGGTILYKAKDRPLGLGNLICKSLQCGSFLTHLSGTEAAGTPAPAELRDPRPLPIRWEAPNGSCVSLQQCFQKTTAQEGGQALTVICSDFQPKVQSRLVGGSSVCEGIAEVRQRSQWEALCDSSAARGRGRWEELCREQQCGDLISFHTVDADKTSPGFLCAQEKLSQCYHLQKKKHCNKRVFVTCQDPNPAGLAPGTVASIILTLVLLVVLLAMCGPLVYKKLVKKFRQKKQRQWIGPTGVNQNMSFHRSHTATVRSQVENPTASHVDNEYSQPPRNSHLSAYPALEGALHRSSTQPDNSSDSDYDLQVAQRL.

The first 23 residues, 1 to 23 (MDSHEVLLAATYLLGTLAAFCLG), serve as a signal peptide directing secretion. Residues 25-371 (SGRGGLDIQV…VFVTCQDPNP (347 aa)) are Extracellular-facing. SRCR domains follow at residues 34-133 (VMLS…LICL), 159-268 (LQLV…VICS), and 276-367 (SRLV…VTCQ). 4 disulfide bridges follow: Cys-43–Cys-85, Cys-59–Cys-125, Cys-80–Cys-132, and Cys-106–Cys-116. N-linked (GlcNAc...) asparagine glycans are attached at residues Asn-117, Asn-118, Asn-178, and Asn-241. 6 disulfides stabilise this stretch: Cys-201/Cys-267, Cys-244/Cys-250, Cys-285/Cys-321, Cys-301/Cys-358, Cys-316/Cys-366, and Cys-341/Cys-349. Residues 372–401 (AGLAPGTVASIILTLVLLVVLLAMCGPLVY) form a helical membrane-spanning segment. Residues 402–494 (KKLVKKFRQK…DYDLQVAQRL (93 aa)) are Cytoplasmic-facing. A Phosphoserine modification is found at Ser-438. Composition is skewed to polar residues over residues 439–461 (QVEN…NSHL) and 473–483 (RSSTQPDNSSD). The disordered stretch occupies residues 439 to 494 (QVENPTASHVDNEYSQPPRNSHLSAYPALEGALHRSSTQPDNSSDSDYDLQVAQRL). Position 452 is a phosphotyrosine (Tyr-452). Phosphoserine is present on residues Ser-459, Ser-482, and Ser-484. Phosphotyrosine is present on Tyr-486.

Interacts with CD72/LYB-2. Interacts with PTPN6/SHP-1. Interacts with CBL. Interacts with CD5L. In terms of processing, phosphorylated on serine, threonine and tyrosine residues following TCR stimulation. Phosphorylated by LCK on Tyr-452 and Tyr-486 upon TCR engagement.

The protein resides in the cell membrane. Lymphoid-specific receptor expressed by all T-cells and in a subset of B-cells known as B1a cells. Plays a role in the regulation of TCR and BCR signaling, thymocyte selection, T-cell effector differentiation and immune tolerance. Acts by interacting with several ligands expressed on B-cells such as CD5L or CD72 and thereby plays an important role in contact-mediated, T-dependent B-cell activation and in the maintenance of regulatory T and B-cell homeostasis. Functions as a negative regulator of TCR signaling during thymocyte development by associating with several signaling proteins including LCK, CD3Z chain, PI3K or CBL. Mechanistically, co-engagement of CD3 with CD5 enhances phosphorylated CBL recruitment leading to increased VAV1 phosphorylation and degradation. Modulates B-cell biology through ERK1/2 activation in a Ca(2+)-dependent pathway via the non-selective Ca(2+) channel TRPC1, leading to IL-10 production. The sequence is that of T-cell surface glycoprotein CD5 (Cd5) from Mus musculus (Mouse).